A 383-amino-acid chain; its full sequence is BRISC and BRCA1-A complex member 2 (383 aa).

Met-1 carries the post-translational modification N-acetylmethionine. Ser-2 is subject to Phosphoserine. UEV-like stretches follow at residues 30-147 (DATN…TLLE) and 275-364 (IAAF…RAKA).

This sequence belongs to the BABAM2 family. As to quaternary structure, component of the ARISC complex, at least composed of UIMC1/RAP80, ABRAXAS1, BRCC3/BRCC36, BABAM2 and BABAM1/NBA1. Component of the BRCA1-A complex, at least composed of BRCA1, BARD1, UIMC1/RAP80, ABRAXAS1, BRCC3/BRCC36, BABAM2 and BABAM1/NBA1. In the BRCA1-A complex, interacts directly with ABRAXAS1, BRCC3/BRCC36 and BABAM1/NBA1. Binds polyubiquitin. Component of the BRISC complex, at least composed of ABRAXAS2, BRCC3/BRCC36, BABAM2 and BABAM1/NBA1. Identified in a complex with SHMT2 and the other subunits of the BRISC complex. Component of the BRCA1/BRCA2 containing complex (BRCC), which also contains BRCA1, BRCA2, BARD1, BRCC3/BRCC36 and RAD51. BRCC is a ubiquitin E3 ligase complex that enhances cellular survival following DNA damage. May interact with FAS and TNFRSF1A.

It localises to the cytoplasm. The protein resides in the nucleus. In terms of biological role, component of the BRCA1-A complex, a complex that specifically recognizes 'Lys-63'-linked ubiquitinated histones H2A and H2AX at DNA lesions sites, leading to target the BRCA1-BARD1 heterodimer to sites of DNA damage at double-strand breaks (DSBs). The BRCA1-A complex also possesses deubiquitinase activity that specifically removes 'Lys-63'-linked ubiquitin on histones H2A and H2AX. In the BRCA1-A complex, it acts as an adapter that bridges the interaction between BABAM1/NBA1 and the rest of the complex, thereby being required for the complex integrity and modulating the E3 ubiquitin ligase activity of the BRCA1-BARD1 heterodimer. Component of the BRISC complex, a multiprotein complex that specifically cleaves 'Lys-63'-linked ubiquitin in various substrates. Within the BRISC complex, acts as an adapter that bridges the interaction between BABAM1/NBA1 and the rest of the complex, thereby being required for the complex integrity. The BRISC complex is required for normal mitotic spindle assembly and microtubule attachment to kinetochores via its role in deubiquitinating NUMA1. The BRISC complex plays a role in interferon signaling via its role in the deubiquitination of the interferon receptor IFNAR1; deubiquitination increases IFNAR1 activity by enhancing its stability and cell surface expression. Down-regulates the response to bacterial lipopolysaccharide (LPS) via its role in IFNAR1 deubiquitination. May play a role in homeostasis or cellular differentiation in cells of neural, epithelial and germline origins. May also act as a death receptor-associated anti-apoptotic protein, which inhibits the mitochondrial apoptotic pathway. May regulate TNF-alpha signaling through its interactions with TNFRSF1A; however these effects may be indirect. The protein is BRISC and BRCA1-A complex member 2 (BABAM2) of Bos taurus (Bovine).